Consider the following 67-residue polypeptide: Photosystem II reaction center protein H (67 aa).

The chain crosses the membrane as a helical span at residues G27 to L47.

The protein belongs to the PsbH family. As to quaternary structure, PSII is composed of 1 copy each of membrane proteins PsbA, PsbB, PsbC, PsbD, PsbE, PsbF, PsbH, PsbI, PsbJ, PsbK, PsbL, PsbM, PsbT, PsbX, PsbY, Psb30/Ycf12, peripheral proteins PsbO, CyanoQ (PsbQ), PsbU, PsbV and a large number of cofactors. It forms dimeric complexes.

Its subcellular location is the cellular thylakoid membrane. One of the components of the core complex of photosystem II (PSII), required for its stability and/or assembly. PSII is a light-driven water:plastoquinone oxidoreductase that uses light energy to abstract electrons from H(2)O, generating O(2) and a proton gradient subsequently used for ATP formation. It consists of a core antenna complex that captures photons, and an electron transfer chain that converts photonic excitation into a charge separation. The sequence is that of Photosystem II reaction center protein H from Prochlorococcus marinus (strain SARG / CCMP1375 / SS120).